A 66-amino-acid polypeptide reads, in one-letter code: Large ribosomal subunit protein bL31 (66 aa).

The Zn(2+) site is built by C16, C18, C36, and C39.

It belongs to the bacterial ribosomal protein bL31 family. Type A subfamily. As to quaternary structure, part of the 50S ribosomal subunit. Requires Zn(2+) as cofactor.

Its function is as follows. Binds the 23S rRNA. The protein is Large ribosomal subunit protein bL31 of Desulforamulus reducens (strain ATCC BAA-1160 / DSM 100696 / MI-1) (Desulfotomaculum reducens).